The chain runs to 359 residues: Peptide chain release factor 1 (359 aa).

Gln-235 is subject to N5-methylglutamine. Positions 283–309 (QKAESERSQARRSQVGSGDRSERIRTY) are disordered.

The protein belongs to the prokaryotic/mitochondrial release factor family. Methylated by PrmC. Methylation increases the termination efficiency of RF1.

It is found in the cytoplasm. Peptide chain release factor 1 directs the termination of translation in response to the peptide chain termination codons UAG and UAA. The sequence is that of Peptide chain release factor 1 from Brucella abortus (strain S19).